A 397-amino-acid chain; its full sequence is Xyloglucan O-acetyltransferase 3 (397 aa).

Over 1–3 the chain is Cytoplasmic; that stretch reads MNR. The helical; Signal-anchor for type II membrane protein transmembrane segment at 4-24 threads the bilayer; it reads FFYTVGLIFLFSFFILYSPKT. The Lumenal segment spans residues 25-397; it reads SDLSNNVDLH…RHAFTDFTWS (373 aa). 4 disulfide bridges follow: Cys48–Cys98, Cys69–Cys134, Cys78–Cys370, and Cys293–Cys366. N-linked (GlcNAc...) asparagine glycosylation occurs at Asn66. The short motif at 121-123 is the GDS motif element; it reads GDS. Ser123 (nucleophile) is an active-site residue. Asn162, Asn182, and Asn294 each carry an N-linked (GlcNAc...) asparagine glycan. Asp365 serves as the catalytic Proton donor. The short motif at 365–368 is the DXXH motif element; it reads DCVH. The active-site Proton acceptor is the His368.

The protein belongs to the PC-esterase family. TBL subfamily.

Its subcellular location is the golgi apparatus membrane. Xyloglucan acetyltransferase that catalyzes the acetylation of fucosylated Gal residues on xyloglucan side chains. Predominantly catalyze 6-O-monoacetylation of Gal residues in the Fuc-Gal-Xyl trisaccharide side chains of xyloglucan oligomers. This chain is Xyloglucan O-acetyltransferase 3, found in Populus trichocarpa (Western balsam poplar).